Here is a 315-residue protein sequence, read N- to C-terminus: Putative steroid dehydrogenase 3 (315 aa).

Ala-47–Ile-76 contacts NADP(+). The active site involves Tyr-202.

The protein belongs to the short-chain dehydrogenases/reductases (SDR) family. 17-beta-HSD 3 subfamily.

The sequence is that of Putative steroid dehydrogenase 3 (stdh-3) from Caenorhabditis elegans.